Reading from the N-terminus, the 209-residue chain is Ribosomal RNA large subunit methyltransferase E (209 aa).

S-adenosyl-L-methionine is bound by residues Gly-63, Trp-65, Asp-83, Asp-99, and Asp-124. Catalysis depends on Lys-164, which acts as the Proton acceptor.

The protein belongs to the class I-like SAM-binding methyltransferase superfamily. RNA methyltransferase RlmE family.

It is found in the cytoplasm. The enzyme catalyses uridine(2552) in 23S rRNA + S-adenosyl-L-methionine = 2'-O-methyluridine(2552) in 23S rRNA + S-adenosyl-L-homocysteine + H(+). Functionally, specifically methylates the uridine in position 2552 of 23S rRNA at the 2'-O position of the ribose in the fully assembled 50S ribosomal subunit. In Shewanella loihica (strain ATCC BAA-1088 / PV-4), this protein is Ribosomal RNA large subunit methyltransferase E.